The primary structure comprises 196 residues: DnaA initiator-associating protein DiaA (196 aa).

The 163-residue stretch at Met34–Asp196 folds into the SIS domain.

The protein belongs to the SIS family. DiaA subfamily. As to quaternary structure, homotetramer; dimer of dimers.

Its function is as follows. Required for the timely initiation of chromosomal replication via direct interactions with the DnaA initiator protein. The sequence is that of DnaA initiator-associating protein DiaA from Pectobacterium atrosepticum (strain SCRI 1043 / ATCC BAA-672) (Erwinia carotovora subsp. atroseptica).